The following is a 102-amino-acid chain: Protein translation factor SUI1 homolog (102 aa).

This sequence belongs to the SUI1 family.

This is Protein translation factor SUI1 homolog from Methanosarcina acetivorans (strain ATCC 35395 / DSM 2834 / JCM 12185 / C2A).